The chain runs to 312 residues: MLQYQIDRIDHQIADDRSQTGTFLIGPLERGQATTLGNSLRRVLMGGLEGSAVTAVRIAGINHEYATIPGVREDVLDILLNCKQLSINSSNPELEIGRLVASGPMEVKANDIQFSSQVEIVDGEKPIATIQEGHNLELEIHVERGVGYRPVDRKSEETTAIDLLQIDAVFMPVKRVNFTIDETAVAEGATGRERLKMEVVTDGSTSPDDAIAEAANQLIELFQPLATVTMVEEIPEEPEPSPEAQIPLEELNLSVRAYNCLKRAQVNSVSDLMGFSYEDLLEIKNFGSKSADEVIEALERIGISIPQSRTSV.

Positions 1–229 (MLQYQIDRID…ELFQPLATVT (229 aa)) are alpha N-terminal domain (alpha-NTD). An alpha C-terminal domain (alpha-CTD) region spans residues 240–312 (PSPEAQIPLE…ISIPQSRTSV (73 aa)).

It belongs to the RNA polymerase alpha chain family. In terms of assembly, in cyanobacteria the RNAP catalytic core is composed of 2 alpha, 1 beta, 1 beta', 1 gamma and 1 omega subunit. When a sigma factor is associated with the core the holoenzyme is formed, which can initiate transcription.

The catalysed reaction is RNA(n) + a ribonucleoside 5'-triphosphate = RNA(n+1) + diphosphate. Its function is as follows. DNA-dependent RNA polymerase catalyzes the transcription of DNA into RNA using the four ribonucleoside triphosphates as substrates. The sequence is that of DNA-directed RNA polymerase subunit alpha from Prochlorococcus marinus (strain AS9601).